Here is an 89-residue protein sequence, read N- to C-terminus: Long neurotoxin 1 (89 aa).

An N-terminal signal peptide occupies residues 1-21 (MKTLLLTLVVVTIVCLDLGDS). 4 cysteine pairs are disulfide-bonded: cysteine 24/cysteine 41, cysteine 34/cysteine 58, cysteine 62/cysteine 74, and cysteine 75/cysteine 80.

The protein belongs to the three-finger toxin family. Long-chain subfamily. Type II alpha-neurotoxin sub-subfamily. Expressed by the venom gland.

It is found in the secreted. Binds with high affinity to muscular (alpha-1/CHRNA1) and neuronal (alpha-7/CHRNA7) nicotinic acetylcholine receptor (nAChR) and inhibits acetylcholine from binding to the receptor, thereby impairing neuromuscular and neuronal transmission. The chain is Long neurotoxin 1 from Pseudonaja textilis (Eastern brown snake).